Reading from the N-terminus, the 145-residue chain is Large ribosomal subunit protein uL16 (145 aa).

It belongs to the universal ribosomal protein uL16 family. As to quaternary structure, part of the 50S ribosomal subunit.

In terms of biological role, binds 23S rRNA and is also seen to make contacts with the A and possibly P site tRNAs. The chain is Large ribosomal subunit protein uL16 from Exiguobacterium sibiricum (strain DSM 17290 / CCUG 55495 / CIP 109462 / JCM 13490 / 255-15).